The following is a 584-amino-acid chain: Poly(A) RNA polymerase protein 2 (584 aa).

Positions 1–11 are enriched in polar residues; the sequence is MGAKSVTASSS. 2 disordered regions span residues 1–63 and 81–147; these read MGAK…LPKD and EGFD…QELE. Over residues 12–35 the composition is skewed to basic residues; that stretch reads KKIKNRHNGKVKKSKKIKKVRKPQ. Over residues 53 to 63 the composition is skewed to basic and acidic residues; that stretch reads NEQETNKLPKD. Over residues 130–139 the composition is skewed to acidic residues; that stretch reads SEDEQAEQEE. Mg(2+) is bound by residues aspartate 236 and aspartate 238. Residues glycine 301, lysine 326, asparagine 431, and arginine 435 each coordinate ATP. One can recognise a PAP-associated domain in the interval 371–431; it reads NLGVLLIEFF…AIQDPGDESN (61 aa). The interval 525 to 584 is disordered; sequence TSTATATTTDDDYEITNPPAKKAKIEEKPESEPAKRNSGETYITVSSEDDDEDGYNPYTL. Over residues 547–562 the composition is skewed to basic and acidic residues; sequence AKIEEKPESEPAKRNS.

The protein belongs to the DNA polymerase type-B-like family. As to quaternary structure, component of the TRAMP complex (also called TRF4 complex) composed of at least HUL4, MTR4, PAP2/TRF4 and either AIR1 or AIR2. Interacts with NOP53 and POL2. Interacts directly with AIR2. Requires Mg(2+) as cofactor. It depends on Mn(2+) as a cofactor.

It localises to the nucleus. It carries out the reaction RNA(n) + ATP = RNA(n)-3'-adenine ribonucleotide + diphosphate. Catalytic subunit of the TRAMP complex which has a poly(A) RNA polymerase activity and is involved in a post-transcriptional quality control mechanism limiting inappropriate expression of genetic information. Polyadenylation is required for the degradative activity of the exosome on several of its nuclear RNA substrates like cryptic transcripts generated by RNA polymerase II and III, or hypomethylated pre-tRNAi-Met. Polyadenylates RNA processing and degradation intermediates of snRNAs, snoRNAs and mRNAs that accumulate in strains lacking a functional exosome. TRF4 is also required for proper nuclear division in mitosis, DNA damage repair and sister chromatid cohesion. Involved in the regulation of histone mRNA levels. May mediate mitotic chromosome condensation. This is Poly(A) RNA polymerase protein 2 (PAP2) from Saccharomyces cerevisiae (strain ATCC 204508 / S288c) (Baker's yeast).